The primary structure comprises 217 residues: Large ribosomal subunit protein uL4 (217 aa).

Residues 42–100 are disordered; that stretch reads RAAARQGTHSTKTRGDVSGGGRKPYRQKGTGRARQGSTRAPQFTGGGVVHGPKPRDYSQ.

Belongs to the universal ribosomal protein uL4 family. As to quaternary structure, part of the 50S ribosomal subunit.

One of the primary rRNA binding proteins, this protein initially binds near the 5'-end of the 23S rRNA. It is important during the early stages of 50S assembly. It makes multiple contacts with different domains of the 23S rRNA in the assembled 50S subunit and ribosome. Functionally, forms part of the polypeptide exit tunnel. This is Large ribosomal subunit protein uL4 from Mycobacterium avium (strain 104).